Reading from the N-terminus, the 178-residue chain is MNKPTKLFSTLALAAGMTAAAAGGAGTIHAQQPETTVSIDDLYSYPIDSYLVSAEALNVRTKPSASSQKADTLHLGDSLKLISFSNADWAKVKYKNGKTGFVSTHYIVKAATTVKTKTKTKVYTSADGKSIKTLPADTSVSFLGWSKTNKGGFDFDWVFVDYGGTTGYMKTKDLHMTK.

Residues 1 to 30 (MNKPTKLFSTLALAAGMTAAAAGGAGTIHA) form the signal peptide. 2 SH3b domains span residues 47-111 (IDSY…VKAA) and 116-178 (TKTK…HMTK).

It localises to the secreted. The protein resides in the cell wall. Its activity is regulated as follows. Increases in stationary phase in a strain lacking the WprA protease. This is Cell wall-binding protein YwsB (ywsB) from Bacillus subtilis (strain 168).